The chain runs to 547 residues: Glucose-6-phosphate isomerase (547 aa).

The Proton donor role is filled by glutamate 354. Active-site residues include histidine 385 and lysine 513.

The protein belongs to the GPI family.

It is found in the cytoplasm. It carries out the reaction alpha-D-glucose 6-phosphate = beta-D-fructose 6-phosphate. The protein operates within carbohydrate biosynthesis; gluconeogenesis. Its pathway is carbohydrate degradation; glycolysis; D-glyceraldehyde 3-phosphate and glycerone phosphate from D-glucose: step 2/4. In terms of biological role, catalyzes the reversible isomerization of glucose-6-phosphate to fructose-6-phosphate. This chain is Glucose-6-phosphate isomerase, found in Endomicrobium trichonymphae.